Reading from the N-terminus, the 81-residue chain is Photosystem I iron-sulfur center (81 aa).

2 consecutive 4Fe-4S ferredoxin-type domains span residues 2–31 (SHSVKIYDTCIGCTQCVRACPTDVLEMIPW) and 39–68 (IASAPRTEDCVGCKRCESACPTDFLSVRVS). [4Fe-4S] cluster-binding residues include Cys11, Cys14, Cys17, Cys21, Cys48, Cys51, Cys54, and Cys58.

As to quaternary structure, the eukaryotic PSI reaction center is composed of at least 11 subunits. [4Fe-4S] cluster is required as a cofactor.

It is found in the plastid. Its subcellular location is the chloroplast thylakoid membrane. The enzyme catalyses reduced [plastocyanin] + hnu + oxidized [2Fe-2S]-[ferredoxin] = oxidized [plastocyanin] + reduced [2Fe-2S]-[ferredoxin]. In terms of biological role, apoprotein for the two 4Fe-4S centers FA and FB of photosystem I (PSI); essential for photochemical activity. FB is the terminal electron acceptor of PSI, donating electrons to ferredoxin. The C-terminus interacts with PsaA/B/D and helps assemble the protein into the PSI complex. Required for binding of PsaD and PsaE to PSI. PSI is a plastocyanin-ferredoxin oxidoreductase, converting photonic excitation into a charge separation, which transfers an electron from the donor P700 chlorophyll pair to the spectroscopically characterized acceptors A0, A1, FX, FA and FB in turn. The chain is Photosystem I iron-sulfur center from Daucus carota (Wild carrot).